Here is a 659-residue protein sequence, read N- to C-terminus: Enzymatic polyprotein (659 aa).

The protease stretch occupies residues 1-180 (MSLRNRTNPN…FLEEGGNHVD (180 aa)). Aspartate 34 is a catalytic residue. In terms of domain architecture, Reverse transcriptase spans 252–436 (LELKVIKPSK…EKINFLGLEI (185 aa)).

Belongs to the caulimoviridae enzymatic polyprotein family.

The catalysed reaction is DNA(n) + a 2'-deoxyribonucleoside 5'-triphosphate = DNA(n+1) + diphosphate. Functionally, encodes for at least two polypeptides: protease (PR) and reverse transcriptase (RT). The protease processes the polyprotein in cis. Reverse transcriptase is multifunctional enzyme that converts the viral RNA genome into dsDNA in viral cytoplasmic capsids. This enzyme displays a DNA polymerase activity that can copy either DNA or RNA templates, and a ribonuclease H (RNase H) activity that cleaves the RNA strand of RNA-DNA heteroduplexes in a partially processive 3'- to 5'-endonucleasic mode. Neo-synthesized pregenomic RNA (pgRNA) are encapsidated, and reverse-transcribed inside the nucleocapsid. Partial (+)DNA is synthesized from the (-)DNA template and generates the relaxed circular DNA (RC-DNA) genome. After budding and infection, the RC-DNA migrates in the nucleus, and is converted into a plasmid-like covalently closed circular DNA (cccDNA). The protein is Enzymatic polyprotein of Dianthus caryophyllus (Carnation).